Consider the following 80-residue polypeptide: Putative membrane protein insertion efficiency factor (80 aa).

This sequence belongs to the UPF0161 family.

It localises to the cell inner membrane. Functionally, could be involved in insertion of integral membrane proteins into the membrane. The protein is Putative membrane protein insertion efficiency factor of Picosynechococcus sp. (strain ATCC 27264 / PCC 7002 / PR-6) (Agmenellum quadruplicatum).